The sequence spans 485 residues: MDVSKVTTSDGGGDSMETKPSPQPQPAAILSSNAPPPFLSKTYDMVDDHNTDSIVSWSANNNSFIVWKPPEFARDLLPKNFKHNNFSSFVRQLNTYGFRKVDPDRWEFANEGFLRGQKHLLQSITRRKPAHGQGQGHQRSQHSNGQNSSVSACVEVGKFGLEEEVERLKRDKNVLMQELVRLRQQQQSTDNQLQTMVQRLQGMENRQQQLMSFLAKAVQSPHFLSQFLQQQNQQNESNRRISDTSKKRRFKRDGIVRNNDSATPDGQIVKYQPPMHEQAKAMFKQLMKMEPYKTGDDGFLLGNGTSTTEGTEMETSSNQVSGITLKEMPTASEIQSSSPIETTPENVSAASEATENCIPSPDDLTLPDFTHMLPENNSEKPPESFMEPNLGGSSPLLDPDLLIDDSLSFDIDDFPMDSDIDPVDYGLLERLLMSSPVPDNMDSTPVDNETEQEQNGWDKTKHMDNLTQQMGLLSPETLDLSRQNP.

Disordered regions lie at residues 1–34 and 126–149; these read MDVS…SSNA and RRKP…QNSS. The DNA-binding element occupies 35–129; that stretch reads PPPFLSKTYD…LLQSITRRKP (95 aa). Residues 136 to 146 are compositionally biased toward low complexity; sequence GHQRSQHSNGQ. The tract at residues 152 to 218 is hydrophobic repeat HR-A/B; the sequence is ACVEVGKFGL…QLMSFLAKAV (67 aa). 2 disordered regions span residues 229–269 and 436–461; these read QQQN…GQIV and PVPD…DKTK. The Bipartite nuclear localization signal signature appears at 238–252; sequence NRRISDTSKKRRFKR. A compositionally biased stretch (polar residues) spans 441–455; sequence MDSTPVDNETEQEQN. Residues 472-480 carry the Nuclear export signal motif; that stretch reads LLSPETLDL.

It belongs to the HSF family. Class A subfamily. Homotrimer. Interacts with HSP90-2. Exhibits temperature-dependent phosphorylation.

The protein resides in the cytoplasm. It localises to the nucleus. Its function is as follows. Transcriptional regulator that specifically binds DNA sequence 5'-AGAAnnTTCT-3' known as heat shock promoter elements (HSE). The sequence is that of Heat stress transcription factor A-1d (HSFA1D) from Arabidopsis thaliana (Mouse-ear cress).